We begin with the raw amino-acid sequence, 51 residues long: Large ribosomal subunit protein eL39 (51 aa).

The protein belongs to the eukaryotic ribosomal protein eL39 family.

In Methanothermobacter thermautotrophicus (strain ATCC 29096 / DSM 1053 / JCM 10044 / NBRC 100330 / Delta H) (Methanobacterium thermoautotrophicum), this protein is Large ribosomal subunit protein eL39 (rpl39e).